Consider the following 121-residue polypeptide: Holo-[acyl-carrier-protein] synthase (121 aa).

Residues Asp8 and Glu58 each coordinate Mg(2+).

It belongs to the P-Pant transferase superfamily. AcpS family. Mg(2+) is required as a cofactor.

It is found in the cytoplasm. The enzyme catalyses apo-[ACP] + CoA = holo-[ACP] + adenosine 3',5'-bisphosphate + H(+). Transfers the 4'-phosphopantetheine moiety from coenzyme A to a Ser of acyl-carrier-protein. The sequence is that of Holo-[acyl-carrier-protein] synthase from Bacillus pumilus (strain SAFR-032).